A 567-amino-acid chain; its full sequence is Low-affinity glucose transporter (567 aa).

The segment covering 1–24 (MSNQMTDSTSAGSGTEHSVDTNTA) has biased composition (polar residues). Positions 1-36 (MSNQMTDSTSAGSGTEHSVDTNTALKAGSPNDLKVS) are disordered. Over 18–62 (SVDTNTALKAGSPNDLKVSHEEDLNDLEKTAEETLQQKPAKEYIF) the chain is Cytoplasmic. A helical membrane pass occupies residues 63–83 (VSLCCVMVAFGGFVFGWDTGT). Residues 84–113 (ISGFVNQTDFLRRFGQEKADGSHYLSNVRT) lie on the Extracellular side of the membrane. Asn89 is a glycosylation site (N-linked (GlcNAc...) asparagine). The chain crosses the membrane as a helical span at residues 114–134 (GLIVSIFNIGCAVGGIVLSNI). The Cytoplasmic segment spans residues 135–141 (GDRWGRR). The chain crosses the membrane as a helical span at residues 142 to 162 (IGLITVIIIYVIGIIIQIASV). At 163-167 (DKWYQ) the chain is on the extracellular side. Residues 168-188 (YFIGRIISGLGVGGITVLSPM) form a helical membrane-spanning segment. Residues 189 to 199 (LISETAPKHLR) lie on the Cytoplasmic side of the membrane. The chain crosses the membrane as a helical span at residues 200-220 (GTLVSCYQLMITFGIFLGYCT). Over 221-234 (NYGTKNYSNSVQWR) the chain is Extracellular. A helical membrane pass occupies residues 235 to 255 (VPLGLCFAWAIFMVLGMMFVP). The Cytoplasmic portion of the chain corresponds to 256–334 (ESARFLVETD…MGIMIQSLQQ (79 aa)). A helical transmembrane segment spans residues 335-354 (LTGDNYFFYYGTTIFQSVGM). At 355–358 (DDSF) the chain is on the extracellular side. A helical membrane pass occupies residues 359 to 379 (ETSIVLGIVNFASTFFALYTV). At 380–386 (DHFGRRN) the chain is on the cytoplasmic side. Residues 387–407 (CLLYGCVGMVACYVVYASVGV) form a helical membrane-spanning segment. At 408-429 (TRLWPDGPDHPDISSKGAGNCM) the chain is on the extracellular side. The chain crosses the membrane as a helical span at residues 430 to 450 (IVFACFYIFCFATTWAPIAYV). Residues 451-466 (VISESYPLRVKGKAMA) lie on the Cytoplasmic side of the membrane. Residues 467–487 (IASASNWIWGFLIGFFTPFIT) traverse the membrane as a helical segment. At 488 to 493 (SAIHFY) the chain is on the extracellular side. The chain crosses the membrane as a helical span at residues 494 to 514 (YGYVFMGCMVFAFFYVYFFVP). Residues 515 to 567 (ETKGLTLEEVNEMYSEGVLPWKSSSWVPSSRRGAEYDVDALQHDDKPWYKAML) are Cytoplasmic-facing.

The protein belongs to the major facilitator superfamily. Sugar transporter (TC 2.A.1.1) family.

The protein localises to the membrane. Low-affinity glucose transporter. This chain is Low-affinity glucose transporter (RAG1), found in Kluyveromyces lactis (strain ATCC 8585 / CBS 2359 / DSM 70799 / NBRC 1267 / NRRL Y-1140 / WM37) (Yeast).